Here is a 143-residue protein sequence, read N- to C-terminus: Mini-ribonuclease 3 (143 aa).

Asp-23 is an active-site residue.

This sequence belongs to the MrnC RNase family. As to quaternary structure, homodimer. Mg(2+) serves as cofactor.

It localises to the cytoplasm. Involved in correct processing of both the 5' and 3' ends of 23S rRNA precursor. Processes 30S rRNA precursor transcript even in absence of ribonuclease 3 (Rnc); Rnc processes 30S rRNA into smaller rRNA precursors. Cleaves more efficiently on assembled 50S ribosomal subunits. Cleavage is strongly stimulated by ribosomal protein L3 (RplC); 20-30% DMSO can replace RplC, suggesting RplC may alter rRNA conformation. This is Mini-ribonuclease 3 (mrnC) from Bacillus subtilis (strain 168).